The following is a 160-amino-acid chain: Protein BOLA1, chloroplastic (160 aa).

A chloroplast-targeting transit peptide spans 1–50; that stretch reads MFSSSIRLIVSGFHRTQPLKSPVNSPSVFISVPKFFNSESKSTGTGSRSV. Residues 39 to 61 show a composition bias toward polar residues; that stretch reads ESKSTGTGSRSVAMSSVEKTGSD. Positions 39 to 66 are disordered; that stretch reads ESKSTGTGSRSVAMSSVEKTGSDSGAIE.

The protein belongs to the bolA/yrbA family. Interacts in vitro with GRXS14, GRXS15, GRXS16 and GRXS17, but not with GRXC5. Interacts in vivo only with GRXS14 and GRXS16.

It is found in the plastid. Its subcellular location is the chloroplast. Its function is as follows. May act either alone or in interaction with glutaredoxin as a redox-regulated transcriptional regulator, or as a factor regulating Fe-S cluster biogenesis. The glutaredoxin-BOLA1 heterodimers bind a labile, oxygen sensitive iron-sulfur cluster. This Arabidopsis thaliana (Mouse-ear cress) protein is Protein BOLA1, chloroplastic.